Reading from the N-terminus, the 286-residue chain is Tryptophan 2,3-dioxygenase (286 aa).

Substrate contacts are provided by residues 53–57, Tyr-115, and Arg-119; that span reads FIVQH. His-242 contributes to the heme binding site. Residue Thr-256 coordinates substrate.

The protein belongs to the tryptophan 2,3-dioxygenase family. Homotetramer. It depends on heme as a cofactor.

It catalyses the reaction L-tryptophan + O2 = N-formyl-L-kynurenine. It participates in amino-acid degradation; L-tryptophan degradation via kynurenine pathway; L-kynurenine from L-tryptophan: step 1/2. Functionally, heme-dependent dioxygenase that catalyzes the oxidative cleavage of the L-tryptophan (L-Trp) pyrrole ring and converts L-tryptophan to N-formyl-L-kynurenine. Catalyzes the oxidative cleavage of the indole moiety. The chain is Tryptophan 2,3-dioxygenase from Kineococcus radiotolerans (strain ATCC BAA-149 / DSM 14245 / SRS30216).